Reading from the N-terminus, the 151-residue chain is UPF0178 protein YaiI (151 aa).

This sequence belongs to the UPF0178 family.

The sequence is that of UPF0178 protein YaiI from Salmonella agona (strain SL483).